Reading from the N-terminus, the 384-residue chain is Alanine racemase (384 aa).

K46 acts as the Proton acceptor; specific for D-alanine in catalysis. K46 is modified (N6-(pyridoxal phosphate)lysine). R144 contacts substrate. Residue Y278 is the Proton acceptor; specific for L-alanine of the active site. M326 serves as a coordination point for substrate.

This sequence belongs to the alanine racemase family. Requires pyridoxal 5'-phosphate as cofactor.

It catalyses the reaction L-alanine = D-alanine. Its pathway is amino-acid biosynthesis; D-alanine biosynthesis; D-alanine from L-alanine: step 1/1. Its function is as follows. Catalyzes the interconversion of L-alanine and D-alanine. May also act on other amino acids. This is Alanine racemase (alr) from Frankia casuarinae (strain DSM 45818 / CECT 9043 / HFP020203 / CcI3).